We begin with the raw amino-acid sequence, 79 residues long: Protein FAM236C (79 aa).

Residues 19–48 (KGPQKDPEELVAVSDTAEDPSSGTGLPREP) are disordered.

This sequence belongs to the FAM236 family.

The sequence is that of Protein FAM236C from Homo sapiens (Human).